The following is a 283-amino-acid chain: Formamidopyrimidine-DNA glycosylase (283 aa).

Proline 2 functions as the Schiff-base intermediate with DNA in the catalytic mechanism. Catalysis depends on glutamate 3, which acts as the Proton donor. Catalysis depends on lysine 61, which acts as the Proton donor; for beta-elimination activity. Residues histidine 94, arginine 113, and lysine 159 each coordinate DNA. An FPG-type zinc finger spans residues 245 to 279 (DAYGREGESCRRCGAVMRREKFMNRSSFYCPKCQP). The active-site Proton donor; for delta-elimination activity is arginine 269.

The protein belongs to the FPG family. Monomer. The cofactor is Zn(2+).

The enzyme catalyses Hydrolysis of DNA containing ring-opened 7-methylguanine residues, releasing 2,6-diamino-4-hydroxy-5-(N-methyl)formamidopyrimidine.. The catalysed reaction is 2'-deoxyribonucleotide-(2'-deoxyribose 5'-phosphate)-2'-deoxyribonucleotide-DNA = a 3'-end 2'-deoxyribonucleotide-(2,3-dehydro-2,3-deoxyribose 5'-phosphate)-DNA + a 5'-end 5'-phospho-2'-deoxyribonucleoside-DNA + H(+). In terms of biological role, involved in base excision repair of DNA damaged by oxidation or by mutagenic agents. Acts as a DNA glycosylase that recognizes and removes damaged bases. Has a preference for oxidized purines, such as 7,8-dihydro-8-oxoguanine (8-oxoG). Has AP (apurinic/apyrimidinic) lyase activity and introduces nicks in the DNA strand. Cleaves the DNA backbone by beta-delta elimination to generate a single-strand break at the site of the removed base with both 3'- and 5'-phosphates. The polypeptide is Formamidopyrimidine-DNA glycosylase (Mycolicibacterium paratuberculosis (strain ATCC BAA-968 / K-10) (Mycobacterium paratuberculosis)).